Reading from the N-terminus, the 356-residue chain is Outer membrane protein Omp38 (356 aa).

The N-terminal stretch at 1-19 (MKLSRIALATMLVAAPLAA) is a signal peptide. The 119-residue stretch at 221–339 (ELTEDLNMEL…RVFATITGSR (119 aa)) folds into the OmpA-like domain. Positions 237, 271, 273, 279, and 286 each coordinate meso-2,6-diaminopimelate.

Belongs to the outer membrane OOP (TC 1.B.6) superfamily. In terms of assembly, homotrimer. Forms a pore with a size of 1.3 nm.

The protein localises to the cell outer membrane. The protein resides in the host mitochondrion. Its function is as follows. Functions as a porin. Induces apoptosis in human cell lines through caspase-dependent and AIF-dependent pathways. Purified Omp38 enters host cell and localizes to the mitochondria, which presumably leads to a release of proapoptotic molecules such as cytochrome c and AIF (apoptosis-inducing factor). Binds peptidoglycan, contributes to cell wall maintenance. This Acinetobacter baumannii (strain ATCC 19606 / DSM 30007 / JCM 6841 / CCUG 19606 / CIP 70.34 / NBRC 109757 / NCIMB 12457 / NCTC 12156 / 81) protein is Outer membrane protein Omp38.